The primary structure comprises 210 residues: Cell division protein SepF (210 aa).

Disordered stretches follow at residues 22-72 and 79-98; these read DYYE…FDDA and RGPR…RGST. 2 stretches are compositionally biased toward basic and acidic residues: residues 37–60 and 79–88; these read RPRE…REYD and RGPREFDRTP.

This sequence belongs to the SepF family. As to quaternary structure, homodimer. Interacts with FtsZ.

It is found in the cytoplasm. Cell division protein that is part of the divisome complex and is recruited early to the Z-ring. Probably stimulates Z-ring formation, perhaps through the cross-linking of FtsZ protofilaments. Its function overlaps with FtsA. This Mycolicibacterium vanbaalenii (strain DSM 7251 / JCM 13017 / BCRC 16820 / KCTC 9966 / NRRL B-24157 / PYR-1) (Mycobacterium vanbaalenii) protein is Cell division protein SepF.